The chain runs to 1194 residues: DNA polymerase catalytic subunit (1194 aa).

It belongs to the DNA polymerase type-B family. Forms a complex with the ssDNA-binding protein, the DNA polymerase processivity factor, and the alkaline exonuclease. Interacts with the helicase-primase complex composed of the primase, the helicase and the primase-associated factor; this interaction may coordinate leading and lagging strand DNA synthesis at the replication fork.

It is found in the host nucleus. It catalyses the reaction DNA(n) + a 2'-deoxyribonucleoside 5'-triphosphate = DNA(n+1) + diphosphate. It carries out the reaction Endonucleolytic cleavage to 5'-phosphomonoester.. In terms of biological role, replicates viral genomic DNA. The replication complex is composed of six viral proteins: the DNA polymerase, processivity factor, primase, primase-associated factor, helicase, and ssDNA-binding protein. Additionally, the polymerase contains an intrinsic ribonuclease H (RNase H) activity that specifically degrades RNA/DNA heteroduplexes or duplex DNA substrates in the 5' to 3' direction. Therefore, it can catalyze the excision of the RNA primers that initiate the synthesis of Okazaki fragments at a replication fork during viral DNA replication. The sequence is that of DNA polymerase catalytic subunit from Varicella-zoster virus (strain Oka vaccine) (HHV-3).